The following is a 396-amino-acid chain: OTU domain-containing protein 3 (396 aa).

A disordered region spans residues 1–49 (MSRKQAAKSRPGSGGRRAEAERKRDERAARRALAKERRNRPDPGGSGCE). Residues 16–41 (RRAEAERKRDERAARRALAKERRNRP) are compositionally biased toward basic and acidic residues. Residues 64 to 188 (LKLREVPGDG…GEHYDSVRRI (125 aa)) enclose the OTU domain. N6-acetyllysine is present on Lys-65. The tract at residues 69-75 (VPGDGNC) is cys-loop. Asp-72 is an active-site residue. The active-site Nucleophile is the Cys-75. N6-acetyllysine occurs at positions 121 and 128. The interval 126–136 (LSKPGTFAGND) is variable-loop. Residues 176–181 (YRYGEH) form a his-loop region. His-181 is an active-site residue. N6-acetyllysine is present on Lys-219. One can recognise a UBA-like domain in the interval 229 to 269 (DDVEDAVHKVGSATGCTDFNLIVQNLEAENYNIKSAITALL). Residues 275 to 381 (TGNDAEENHE…RDTGRSEADM (107 aa)) form a disordered region. Composition is skewed to basic and acidic residues over residues 280 to 301 (EENH…EAGS), 312 to 331 (NEGR…ESKA), and 343 to 379 (QRRE…RSEA). At Lys-290 the chain carries N6-acetyllysine.

Post-translationally, glucose and fatty acids stimulate CREBBP-dependent acetylation, promoting its nuclear translocation.

Its subcellular location is the cytoplasm. The protein localises to the nucleus. The catalysed reaction is Thiol-dependent hydrolysis of ester, thioester, amide, peptide and isopeptide bonds formed by the C-terminal Gly of ubiquitin (a 76-residue protein attached to proteins as an intracellular targeting signal).. In terms of biological role, deubiquitinating enzyme that hydrolyzes 'Lys-6'- and 'Lys-11'-linked polyubiquitin. Also hydrolyzes heterotypic (mixed and branched) and homotypic chains. Important regulator of energy metabolism. Glucose and fatty acids trigger its nuclear translocation by CBP-dependent acetylation. In the nucleus, deubiquitinates and stabilizes the nuclear receptor PPARD regulating the expression of various genes involved in glucose and lipid metabolism and oxidative phosphorylation. Also acts as a negative regulator of the ribosome quality control (RQC) by mediating deubiquitination of 40S ribosomal proteins RPS10/eS10 and RPS20/uS10, thereby antagonizing ZNF598-mediated 40S ubiquitination. This is OTU domain-containing protein 3 (Otud3) from Mus musculus (Mouse).